The primary structure comprises 538 residues: Chaperonin GroEL 1 (538 aa).

ATP is bound by residues 29–32 (TLGP), 86–90 (DGTTT), glycine 413, and aspartate 494.

This sequence belongs to the chaperonin (HSP60) family. Forms a cylinder of 14 subunits composed of two heptameric rings stacked back-to-back. Interacts with the co-chaperonin GroES.

It localises to the cytoplasm. It carries out the reaction ATP + H2O + a folded polypeptide = ADP + phosphate + an unfolded polypeptide.. Its function is as follows. Together with its co-chaperonin GroES, plays an essential role in assisting protein folding. The GroEL-GroES system forms a nano-cage that allows encapsulation of the non-native substrate proteins and provides a physical environment optimized to promote and accelerate protein folding. The sequence is that of Chaperonin GroEL 1 from Mycobacterium avium (strain 104).